The following is a 188-amino-acid chain: dCTP deaminase (188 aa).

109 to 114 (KSTYAR) contributes to the dCTP binding site. Catalysis depends on E135, which acts as the Proton donor/acceptor. DCTP is bound by residues Q154, Y168, and Q178.

The protein belongs to the dCTP deaminase family. Homotrimer.

It carries out the reaction dCTP + H2O + H(+) = dUTP + NH4(+). The protein operates within pyrimidine metabolism; dUMP biosynthesis; dUMP from dCTP (dUTP route): step 1/2. Functionally, catalyzes the deamination of dCTP to dUTP. This Helicobacter pylori (strain P12) protein is dCTP deaminase.